A 155-amino-acid chain; its full sequence is Ribosome maturation factor RimP (155 aa).

Belongs to the RimP family.

The protein localises to the cytoplasm. In terms of biological role, required for maturation of 30S ribosomal subunits. The polypeptide is Ribosome maturation factor RimP (Synechococcus sp. (strain CC9902)).